The primary structure comprises 343 residues: Aspartate carbamoyltransferase catalytic subunit (343 aa).

2 residues coordinate carbamoyl phosphate: Arg54 and Thr55. Lys82 provides a ligand contact to L-aspartate. Carbamoyl phosphate is bound by residues Arg104, His134, and Gln137. L-aspartate contacts are provided by Arg177 and Arg232. Residues Gly277 and Pro278 each contribute to the carbamoyl phosphate site. Residues 323 to 343 are disordered; the sequence is PDQSNPQRNVTNTSNWQETKR.

Belongs to the aspartate/ornithine carbamoyltransferase superfamily. ATCase family. Heterododecamer (2C3:3R2) of six catalytic PyrB chains organized as two trimers (C3), and six regulatory PyrI chains organized as three dimers (R2).

It carries out the reaction carbamoyl phosphate + L-aspartate = N-carbamoyl-L-aspartate + phosphate + H(+). It functions in the pathway pyrimidine metabolism; UMP biosynthesis via de novo pathway; (S)-dihydroorotate from bicarbonate: step 2/3. Catalyzes the condensation of carbamoyl phosphate and aspartate to form carbamoyl aspartate and inorganic phosphate, the committed step in the de novo pyrimidine nucleotide biosynthesis pathway. This is Aspartate carbamoyltransferase catalytic subunit from Renibacterium salmoninarum (strain ATCC 33209 / DSM 20767 / JCM 11484 / NBRC 15589 / NCIMB 2235).